Reading from the N-terminus, the 175-residue chain is Bacterial proteasome activator (175 aa).

The segment at 152–175 (LPPGIQVPGAQRGGATHPGTGQYL) is disordered. Residues 173 to 175 (QYL) carry the HbYX motif motif.

This sequence belongs to the Bpa family. In terms of assembly, forms a homooligomeric, either hexameric or heptameric, ring-like structure which stacks co-axially with the proteasomal alpha-rings.

Its function is as follows. Interacts with the core proteasome alpha-subunit (PrcA) through its C-terminal hydrophobic-tyrosine-X motif (HbYX motif). Interaction of Bpa with the proteasome stimulates proteasomal peptidase and casein degradation activity, which suggests Bpa could play a role in the removal of non-native or damaged proteins by influencing the conformation of the proteasome complex upon interaction. The chain is Bacterial proteasome activator from Mycolicibacterium smegmatis (strain ATCC 700084 / mc(2)155) (Mycobacterium smegmatis).